A 477-amino-acid chain; its full sequence is Glutamyl-tRNA reductase (477 aa).

Residues 49–52 (TCNR), Ser-109, 114–116 (EGQ), and Gln-120 contribute to the substrate site. The active-site Nucleophile is the Cys-50. 221–226 (GAGSMS) lines the NADP(+) pocket.

It belongs to the glutamyl-tRNA reductase family. In terms of assembly, homodimer.

The catalysed reaction is (S)-4-amino-5-oxopentanoate + tRNA(Glu) + NADP(+) = L-glutamyl-tRNA(Glu) + NADPH + H(+). The protein operates within porphyrin-containing compound metabolism; protoporphyrin-IX biosynthesis; 5-aminolevulinate from L-glutamyl-tRNA(Glu): step 1/2. Functionally, catalyzes the NADPH-dependent reduction of glutamyl-tRNA(Glu) to glutamate 1-semialdehyde (GSA). The sequence is that of Glutamyl-tRNA reductase from Thermobifida fusca (strain YX).